The chain runs to 378 residues: uncharacterized protein (378 aa).

Over residues methionine 1–lysine 11 the composition is skewed to polar residues. The tract at residues methionine 1 to proline 33 is disordered.

The protein to B.subtilis YxjH.

This is an uncharacterized protein from Bacillus subtilis (strain 168).